Reading from the N-terminus, the 450-residue chain is tRNA-2-methylthio-N(6)-dimethylallyladenosine synthase (450 aa).

Residues 2–119 (KKVFVKTYGC…LPDLIARRQR (118 aa)) form the MTTase N-terminal domain. [4Fe-4S] cluster contacts are provided by cysteine 11, cysteine 48, cysteine 82, cysteine 156, cysteine 160, and cysteine 163. One can recognise a Radical SAM core domain in the interval 142 to 375 (RVEGPSAFVS…QATIEENVQR (234 aa)). Positions 378–448 (QGMVGTVQRI…PHSLRGEIVV (71 aa)) constitute a TRAM domain.

This sequence belongs to the methylthiotransferase family. MiaB subfamily. In terms of assembly, monomer. The cofactor is [4Fe-4S] cluster.

The protein localises to the cytoplasm. It catalyses the reaction N(6)-dimethylallyladenosine(37) in tRNA + (sulfur carrier)-SH + AH2 + 2 S-adenosyl-L-methionine = 2-methylsulfanyl-N(6)-dimethylallyladenosine(37) in tRNA + (sulfur carrier)-H + 5'-deoxyadenosine + L-methionine + A + S-adenosyl-L-homocysteine + 2 H(+). Its function is as follows. Catalyzes the methylthiolation of N6-(dimethylallyl)adenosine (i(6)A), leading to the formation of 2-methylthio-N6-(dimethylallyl)adenosine (ms(2)i(6)A) at position 37 in tRNAs that read codons beginning with uridine. This is tRNA-2-methylthio-N(6)-dimethylallyladenosine synthase from Cupriavidus taiwanensis (strain DSM 17343 / BCRC 17206 / CCUG 44338 / CIP 107171 / LMG 19424 / R1) (Ralstonia taiwanensis (strain LMG 19424)).